The sequence spans 361 residues: uncharacterized protein (361 aa).

Positions 1–28 are cleaved as a signal peptide; the sequence is MSKSKFTKIIVVICIAAMFITGTSILSF.

This is an uncharacterized protein from Ruminiclostridium cellulolyticum (strain ATCC 35319 / DSM 5812 / JCM 6584 / H10) (Clostridium cellulolyticum).